A 303-amino-acid chain; its full sequence is MRIVFMGTPGFAEVILRALVGDKDIEVVGLFTQMDKPFGRKKELKAPETKTYILENHLNIPIFQPQSLKEPEVQILKDLKPNFIVVVAYGKILPKEVLTIAPCINLHASLLPKYRGASPIHEMILNDNKIYGISTMLMDVELDSGDILESASFLREDYLDLDALSLKLAHMGAALLLSTLKNFSSITRKSQDHMQASFCKKITKSDGLVGFKDAKSLFLKSLAFKSWPEIFLENGLKLLEVELVENEKSHKEGEILEIDEKGVLVGCLKGSVRIARLQAVGKKPLKAKDYLNGKRLKIGGILA.

109-112 (SLLP) contributes to the (6S)-5,6,7,8-tetrahydrofolate binding site.

The protein belongs to the Fmt family.

It catalyses the reaction L-methionyl-tRNA(fMet) + (6R)-10-formyltetrahydrofolate = N-formyl-L-methionyl-tRNA(fMet) + (6S)-5,6,7,8-tetrahydrofolate + H(+). Functionally, attaches a formyl group to the free amino group of methionyl-tRNA(fMet). The formyl group appears to play a dual role in the initiator identity of N-formylmethionyl-tRNA by promoting its recognition by IF2 and preventing the misappropriation of this tRNA by the elongation apparatus. The protein is Methionyl-tRNA formyltransferase of Helicobacter pylori (strain ATCC 700392 / 26695) (Campylobacter pylori).